The sequence spans 55 residues: MAKGVREKIKLVSSAGTGHFYTTTKNKRTKPEKMELKKFDPVVRQHVIYKEAKIK.

It belongs to the bacterial ribosomal protein bL33 family.

In Sodalis glossinidius (strain morsitans), this protein is Large ribosomal subunit protein bL33.